The following is a 426-amino-acid chain: MLDLKRIRNNPEEIKQIMQNRGEDFDNKLIDDVVALDERRRQILVEVEQLKSKRNSESSQIGKLKKEGKDTSAIMADMKKLSDDIKAFDVELNEVDEKIKYIMLRIPNIPNPNVPDGETDEDNIEIRKWGEPTKFDFESKAHWDIGTDLDILDFERGGKIAGSRFTVYKGLGARLERAIINYFLDMHTIDHGYTEILPPYMVNRDSMTGTGQLPKFEEDAFKVENNGYFLIPTAEVPVTNMYRNEILNGDDLPIKHAAYSACFRAEAGSAGRDTRGLVRQHQFNKVELVKFVKPEQSYDELEKLTNDAEDVLKGLGLPYRVVRICKGDLGFTAALKYDIEVWMPSYNRYVEISSCSNFEDFQARRANIRYKENGKGKPEFIHTLNGSGVAIGRTVAAILENYQNEDGTVTIPEALRPYMRNLDVIK.

233–235 contributes to the L-serine binding site; sequence TAE. 264-266 is a binding site for ATP; that stretch reads RAE. An L-serine-binding site is contributed by E287. An ATP-binding site is contributed by 351–354; the sequence is EISS. S387 lines the L-serine pocket.

Belongs to the class-II aminoacyl-tRNA synthetase family. Type-1 seryl-tRNA synthetase subfamily. As to quaternary structure, homodimer. The tRNA molecule binds across the dimer.

It is found in the cytoplasm. It carries out the reaction tRNA(Ser) + L-serine + ATP = L-seryl-tRNA(Ser) + AMP + diphosphate + H(+). The catalysed reaction is tRNA(Sec) + L-serine + ATP = L-seryl-tRNA(Sec) + AMP + diphosphate + H(+). It participates in aminoacyl-tRNA biosynthesis; selenocysteinyl-tRNA(Sec) biosynthesis; L-seryl-tRNA(Sec) from L-serine and tRNA(Sec): step 1/1. Its function is as follows. Catalyzes the attachment of serine to tRNA(Ser). Is also able to aminoacylate tRNA(Sec) with serine, to form the misacylated tRNA L-seryl-tRNA(Sec), which will be further converted into selenocysteinyl-tRNA(Sec). The chain is Serine--tRNA ligase from Clostridium novyi (strain NT).